The following is a 466-amino-acid chain: ATP synthase subunit beta (466 aa).

156 to 163 (GGAGVGKT) contacts ATP.

It belongs to the ATPase alpha/beta chains family. F-type ATPases have 2 components, CF(1) - the catalytic core - and CF(0) - the membrane proton channel. CF(1) has five subunits: alpha(3), beta(3), gamma(1), delta(1), epsilon(1). CF(0) has three main subunits: a(1), b(2) and c(9-12). The alpha and beta chains form an alternating ring which encloses part of the gamma chain. CF(1) is attached to CF(0) by a central stalk formed by the gamma and epsilon chains, while a peripheral stalk is formed by the delta and b chains.

The protein localises to the cell inner membrane. It carries out the reaction ATP + H2O + 4 H(+)(in) = ADP + phosphate + 5 H(+)(out). Its function is as follows. Produces ATP from ADP in the presence of a proton gradient across the membrane. The catalytic sites are hosted primarily by the beta subunits. This is ATP synthase subunit beta from Dechloromonas aromatica (strain RCB).